Consider the following 519-residue polypeptide: Protein nucleotidyltransferase YdiU (519 aa).

Residues glycine 101, glycine 103, arginine 104, lysine 123, aspartate 135, glycine 136, arginine 193, and arginine 200 each coordinate ATP. Aspartate 271 serves as the catalytic Proton acceptor. The Mg(2+) site is built by asparagine 272 and aspartate 281. ATP is bound at residue aspartate 281.

It belongs to the SELO family. Mg(2+) serves as cofactor. Requires Mn(2+) as cofactor.

It carries out the reaction L-seryl-[protein] + ATP = 3-O-(5'-adenylyl)-L-seryl-[protein] + diphosphate. The catalysed reaction is L-threonyl-[protein] + ATP = 3-O-(5'-adenylyl)-L-threonyl-[protein] + diphosphate. It catalyses the reaction L-tyrosyl-[protein] + ATP = O-(5'-adenylyl)-L-tyrosyl-[protein] + diphosphate. The enzyme catalyses L-histidyl-[protein] + UTP = N(tele)-(5'-uridylyl)-L-histidyl-[protein] + diphosphate. It carries out the reaction L-seryl-[protein] + UTP = O-(5'-uridylyl)-L-seryl-[protein] + diphosphate. The catalysed reaction is L-tyrosyl-[protein] + UTP = O-(5'-uridylyl)-L-tyrosyl-[protein] + diphosphate. Nucleotidyltransferase involved in the post-translational modification of proteins. It can catalyze the addition of adenosine monophosphate (AMP) or uridine monophosphate (UMP) to a protein, resulting in modifications known as AMPylation and UMPylation. This is Protein nucleotidyltransferase YdiU from Tolumonas auensis (strain DSM 9187 / NBRC 110442 / TA 4).